Consider the following 691-residue polypeptide: Two-component response regulator ORR21 (691 aa).

In terms of domain architecture, Response regulatory spans 17-132; it reads KVLVVDDDPT…ELKNIWQHVI (116 aa). Asp-68 carries the 4-aspartylphosphate modification. A compositionally biased stretch (basic and acidic residues) spans 139–155; it reads NKEHEHSGSLDDTDRTR. Disordered stretches follow at residues 139–204 and 616–647; these read NKEH…KKPR and SHPGSSSSSFQSSNVALGKLPDQGRGKNHGFV. The myb-like GARP DNA-binding region spans 199–258; that stretch reads TSKKPRVVWSVELHQQFVNAVNHLGIDKAVPKKILELMNVPGLTRENVASHLQKFRLYLK. Residues 616-628 show a composition bias toward low complexity; sequence SHPGSSSSSFQSS.

This sequence belongs to the ARR family. Type-B subfamily. Two-component system major event consists of a His-to-Asp phosphorelay between a sensor histidine kinase (HK) and a response regulator (RR). In plants, the His-to-Asp phosphorelay involves an additional intermediate named Histidine-containing phosphotransfer protein (HPt). This multistep phosphorelay consists of a His-Asp-His-Asp sequential transfer of a phosphate group between first a His and an Asp of the HK protein, followed by the transfer to a conserved His of the HPt protein and finally the transfer to an Asp in the receiver domain of the RR protein.

The protein localises to the nucleus. In terms of biological role, transcriptional activator that binds specific DNA sequence. Functions as a response regulator involved in His-to-Asp phosphorelay signal transduction system. Phosphorylation of the Asp residue in the receiver domain activates the ability of the protein to promote the transcription of target genes. May directly activate some type-A response regulators in response to cytokinins. In Oryza sativa subsp. indica (Rice), this protein is Two-component response regulator ORR21.